A 110-amino-acid chain; its full sequence is Insulin (110 aa).

The N-terminal stretch at 1–24 is a signal peptide; that stretch reads MALWMHLLTVLALLALWGPNTGQA. 3 cysteine pairs are disulfide-bonded: C31-C96, C43-C109, and C95-C100. Positions 57–87 are cleaved as a propeptide — c peptide; sequence ELEDPQVEQTELGMGLGAGGLQPLALEMALQ.

It belongs to the insulin family. Heterodimer of a B chain and an A chain linked by two disulfide bonds.

It localises to the secreted. Insulin decreases blood glucose concentration. It increases cell permeability to monosaccharides, amino acids and fatty acids. It accelerates glycolysis, the pentose phosphate cycle, and glycogen synthesis in liver. This Cavia porcellus (Guinea pig) protein is Insulin (INS).